The following is a 370-amino-acid chain: DNA replication and repair protein RecF (370 aa).

30-37 serves as a coordination point for ATP; sequence GENAQGKT.

It belongs to the RecF family.

Its subcellular location is the cytoplasm. In terms of biological role, the RecF protein is involved in DNA metabolism; it is required for DNA replication and normal SOS inducibility. RecF binds preferentially to single-stranded, linear DNA. It also seems to bind ATP. The polypeptide is DNA replication and repair protein RecF (Staphylococcus aureus (strain bovine RF122 / ET3-1)).